Consider the following 200-residue polypeptide: 3-isopropylmalate dehydratase small subunit (200 aa).

This sequence belongs to the LeuD family. LeuD type 1 subfamily. As to quaternary structure, heterodimer of LeuC and LeuD.

It catalyses the reaction (2R,3S)-3-isopropylmalate = (2S)-2-isopropylmalate. Its pathway is amino-acid biosynthesis; L-leucine biosynthesis; L-leucine from 3-methyl-2-oxobutanoate: step 2/4. In terms of biological role, catalyzes the isomerization between 2-isopropylmalate and 3-isopropylmalate, via the formation of 2-isopropylmaleate. In Pectobacterium atrosepticum (strain SCRI 1043 / ATCC BAA-672) (Erwinia carotovora subsp. atroseptica), this protein is 3-isopropylmalate dehydratase small subunit.